A 332-amino-acid polypeptide reads, in one-letter code: 5-dehydro-2-deoxygluconokinase (332 aa).

The protein belongs to the carbohydrate kinase PfkB family.

The enzyme catalyses 5-dehydro-2-deoxy-D-gluconate + ATP = 6-phospho-5-dehydro-2-deoxy-D-gluconate + ADP + H(+). It functions in the pathway polyol metabolism; myo-inositol degradation into acetyl-CoA; acetyl-CoA from myo-inositol: step 5/7. In terms of biological role, catalyzes the phosphorylation of 5-dehydro-2-deoxy-D-gluconate (2-deoxy-5-keto-D-gluconate or DKG) to 6-phospho-5-dehydro-2-deoxy-D-gluconate (DKGP). This is 5-dehydro-2-deoxygluconokinase from Bacillus thuringiensis (strain Al Hakam).